The primary structure comprises 986 residues: DNA polymerase I (986 aa).

A 5'-3' exonuclease domain is found at 1–303 (MFMSAKSPLL…RTFIDKIQAF (303 aa)). Residues 304–592 (HRNFSDNQSP…MEDRGIRIDC (289 aa)) enclose the 3'-5' exonuclease domain. The tract at residues 308-327 (SDNQSPVPMGNEADNGEPKK) is disordered. Residues 593-986 (DYLQTLSQQL…HRGSNWMEAK (394 aa)) form a polymerase region.

Belongs to the DNA polymerase type-A family. As to quaternary structure, single-chain monomer with multiple functions.

The catalysed reaction is DNA(n) + a 2'-deoxyribonucleoside 5'-triphosphate = DNA(n+1) + diphosphate. Its function is as follows. In addition to polymerase activity, this DNA polymerase exhibits 3'-5' and 5'-3' exonuclease activity. This Synechocystis sp. (strain ATCC 27184 / PCC 6803 / Kazusa) protein is DNA polymerase I (polA).